We begin with the raw amino-acid sequence, 183 residues long: Large ribosomal subunit protein uL6 (183 aa).

Belongs to the universal ribosomal protein uL6 family. In terms of assembly, part of the 50S ribosomal subunit.

In terms of biological role, this protein binds to the 23S rRNA, and is important in its secondary structure. It is located near the subunit interface in the base of the L7/L12 stalk, and near the tRNA binding site of the peptidyltransferase center. In Chlamydia trachomatis serovar A (strain ATCC VR-571B / DSM 19440 / HAR-13), this protein is Large ribosomal subunit protein uL6.